A 463-amino-acid polypeptide reads, in one-letter code: Heterogeneous nuclear ribonucleoprotein K (463 aa).

Met1 bears the N-acetylmethionine mark. The disordered stretch occupies residues Met1–Arg37. The segment at Met1 to Ser276 is necessary for interaction with DDX1. Residues Phe19 to Arg37 are compositionally biased toward basic and acidic residues. Lys34 bears the N6-acetyllysine; alternate mark. A Glycyl lysine isopeptide (Lys-Gly) (interchain with G-Cter in SUMO1); alternate cross-link involves residue Lys34. Lys34 is covalently cross-linked (Glycyl lysine isopeptide (Lys-Gly) (interchain with G-Cter in SUMO2); alternate). Ser36 carries the phosphoserine modification. The residue at position 39 (Thr39) is a Phosphothreonine. The 63-residue stretch at Met42–Ile104 folds into the KH 1 domain. Glycyl lysine isopeptide (Lys-Gly) (interchain with G-Cter in SUMO2) cross-links involve residues Lys52 and Lys60. 2 repeat units span residues Ala54–Val76 and Gly59–Gly62. Residues Ala54–Ile421 form a 2 X 22 AA approximate repeats region. A 5 X 4 AA repeats of G-X-G-G region spans residues Gly59–Gly407. Residues Ser75 and Ser116 each carry the phosphoserine modification. The KH 2 domain maps to Asp144–Ile209. Lys163 is covalently cross-linked (Glycyl lysine isopeptide (Lys-Gly) (interchain with G-Cter in SUMO1); alternate). Residue Lys163 forms a Glycyl lysine isopeptide (Lys-Gly) (interchain with G-Cter in SUMO2); alternate linkage. Lys198 carries the post-translational modification N6-acetyllysine. The interaction with ZIK1 stretch occupies residues Ile209–Val337. 2 positions are modified to phosphoserine: Ser214 and Ser216. Lys219 is covalently cross-linked (Glycyl lysine isopeptide (Lys-Gly) (interchain with G-Cter in SUMO2); alternate). Residue Lys219 is modified to N6-succinyllysine; alternate. The interval Tyr236–Met273 is RNA-binding RGG-box. 3 repeat units span residues Asp245–Pro250, Gly257–Gly260, and Gly267–Gly270. The interval Asp245–Pro329 is 2 X 6 AA repeats of D-R-R-G-R-P. The segment at Pro250–Pro329 is disordered. Positions Gly252–Pro266 are enriched in low complexity. Residues Ser276–Pro285 show a composition bias toward basic and acidic residues. The residue at position 284 (Ser284) is a Phosphoserine. One copy of the 3-4 repeat lies at Gly295 to Gly298. An Omega-N-methylarginine modification is found at Arg316. Residues Asp324 to Pro329 form a 2-2 repeat. Arg377 is modified (omega-N-methylarginine). A Phosphoserine modification is found at Ser379. Tyr380 is subject to Phosphotyrosine. In terms of domain architecture, KH 3 spans Ile387 to Leu451. 2 consecutive repeat copies span residues Ala399 to Ile421 and Gly404 to Gly407. Residue Lys405 is modified to N6-acetyllysine; alternate. Lys405 participates in a covalent cross-link: Glycyl lysine isopeptide (Lys-Gly) (interchain with G-Cter in SUMO2); alternate. Ser420 is modified (phosphoserine). Lys422 is covalently cross-linked (Glycyl lysine isopeptide (Lys-Gly) (interchain with G-Cter in SUMO1); alternate). Lys422 participates in a covalent cross-link: Glycyl lysine isopeptide (Lys-Gly) (interchain with G-Cter in SUMO2); alternate. A Glycyl lysine isopeptide (Lys-Gly) (interchain with G-Cter in SUMO); alternate cross-link involves residue Lys422.

In terms of assembly, identified in the spliceosome C complex. Interacts with ANKRD28, RBM42 and ZIK1. Interacts with DDX1. Interacts with MDM2; this interaction leads to ubiquitination and proteasomal degradation. Interacts with p53/TP53. Interacts with BRDT. Interacts with IVNS1ABP. Interacts with PPIA/CYPA. Part of a transcription inhibitory ribonucleoprotein complex composed at least of the circular RNA circZNF827, ZNF827 and HNRNPL. Post-translationally, sumoylated by CBX4. Sumoylation is increased upon DNA damage, such as that produced by doxorubicin, etoposide, UV light and camptothecin, due to enhanced CBX4 phosphorylation by HIPK2 under these conditions. Ubiquitinated by MDM2. Doxorubicin treatment does not affect monoubiquitination, but slightly decreases HNRNPK poly-ubiquitination. In terms of processing, O-glycosylated (O-GlcNAcylated), in a cell cycle-dependent manner.

Its subcellular location is the cytoplasm. The protein localises to the nucleus. It is found in the nucleoplasm. It localises to the cell projection. The protein resides in the podosome. One of the major pre-mRNA-binding proteins. Binds tenaciously to poly(C) sequences. Likely to play a role in the nuclear metabolism of hnRNAs, particularly for pre-mRNAs that contain cytidine-rich sequences. Can also bind poly(C) single-stranded DNA. Plays an important role in p53/TP53 response to DNA damage, acting at the level of both transcription activation and repression. When sumoylated, acts as a transcriptional coactivator of p53/TP53, playing a role in p21/CDKN1A and 14-3-3 sigma/SFN induction. As far as transcription repression is concerned, acts by interacting with long intergenic RNA p21 (lincRNA-p21), a non-coding RNA induced by p53/TP53. This interaction is necessary for the induction of apoptosis, but not cell cycle arrest. As part of a ribonucleoprotein complex composed at least of ZNF827, HNRNPL and the circular RNA circZNF827 that nucleates the complex on chromatin, may negatively regulate the transcription of genes involved in neuronal differentiation. The protein is Heterogeneous nuclear ribonucleoprotein K (HNRNPK) of Oryctolagus cuniculus (Rabbit).